The chain runs to 306 residues: MAGTFPPKISPTLMTPDPHFIPGYSGFCPQYRYSLGKTYGQLTSQLLTNPDIRRSELLVLQSNPFPPPRDHSFDGGSQELGGRRQHPGDPNLTISMIPGYTGFIPRSQKFFAKTYAETSRDALSDFHSERRGQEAQRQELLLMSKLQEGRLPRTEQEKQLLASRHRTPLPALAKEPAPFMALRGFQPQGSPYYMEEENPNKCFISGYTGYVPRSRFLIGSGYPITTNRAMVEFAHMNQKKGVRFSEGYKEGGSPHTEPGQIYLEELGLLPRYTGYVPGYKFQFGNTFGRLTQNALGHSTLQKQTVN.

Positions 61-92 are disordered; the sequence is QSNPFPPPRDHSFDGGSQELGGRRQHPGDPNL.

This sequence belongs to the CIMIP2 family. In terms of tissue distribution, expressed in airway epithelial cells.

Its subcellular location is the cytoplasm. The protein resides in the cytoskeleton. It localises to the cilium axoneme. Its function is as follows. Microtubule inner protein (MIP) part of the dynein-decorated doublet microtubules (DMTs) in cilia axoneme, which is required for motile cilia beating. This Xenopus tropicalis (Western clawed frog) protein is Ciliary microtubule inner protein 2B (cimip2b).